A 1199-amino-acid chain; its full sequence is Metabotropic glutamate receptor 1 (1199 aa).

The signal sequence occupies residues 1–18 (MVRLLLIFFPMIFLEMSI). Topologically, residues 19–592 (LPRMPDRKVL…VRYLEWSDIE (574 aa)) are extracellular. Cys-67 and Cys-109 form a disulfide bridge. Tyr-74 is a binding site for L-glutamate. A glycan (N-linked (GlcNAc...) asparagine) is linked at Asn-98. Residues Ser-165 and 186-188 (SAT) contribute to the L-glutamate site. A glycan (N-linked (GlcNAc...) asparagine) is linked at Asn-223. Tyr-236 contacts L-glutamate. A disulfide bridge links Cys-289 with Cys-291. Asp-318 lines the L-glutamate pocket. A disulfide bridge links Cys-378 with Cys-394. N-linked (GlcNAc...) asparagine glycosylation occurs at Asn-397. Lys-409 contributes to the L-glutamate binding site. A disulfide bridge connects residues Cys-432 and Cys-439. A glycan (N-linked (GlcNAc...) asparagine) is linked at Asn-515. The helical transmembrane segment at 593–615 (SIIAIAFSCLGILVTLFVTLIFV) threads the bilayer. Topologically, residues 616 to 629 (LYRDTPVVKSSSRE) are cytoplasmic. The chain crosses the membrane as a helical span at residues 630 to 650 (LCYIILAGIFLGYVCPFTLIA). The Extracellular portion of the chain corresponds to 651-658 (KPTTTSCY). Cys-657 and Cys-746 are oxidised to a cystine. A helical transmembrane segment spans residues 659 to 680 (LQRLLVGLSSAMCYSALVTKTN). The Cytoplasmic segment spans residues 681–703 (RIARILAGSKKKICTRKPRFMSA). Residues 704–727 (WAQVIIASILISVQLTLVVTLIIM) traverse the membrane as a helical segment. The Extracellular segment spans residues 728–750 (EPPMPILSYPSIKEVYLICNTSN). Residues 751-772 (LGVVAPVGYNGLLIMSCTYYAF) form a helical membrane-spanning segment. The Cytoplasmic portion of the chain corresponds to 773 to 785 (KTRNVPANFNEAK). Residues 786 to 807 (YIAFTMYTTCIIWLAFVPIYFG) traverse the membrane as a helical segment. Topologically, residues 808-815 (SNYKIITT) are extracellular. The chain crosses the membrane as a helical span at residues 816–840 (CFAVSLSVTVALGCMFTPKMYIIIA). Residues 841–1199 (KPERNVRSAF…RDYKQSSSTL (359 aa)) are Cytoplasmic-facing. Position 853 is a phosphoserine (Ser-853). The residue at position 871 (Thr-871) is a Phosphothreonine. Disordered regions lie at residues 882-905 (GAGN…QAPK), 959-1036 (EEDN…QPKS), and 1056-1081 (HAVL…PPQH). Over residues 885–895 (NANSNGKSVSW) the composition is skewed to polar residues. 2 positions are modified to phosphoserine: Ser-894 and Ser-969. The segment covering 1012-1033 (GLPPPLPQQQPQQPPPQQPPQQ) has biased composition (pro residues). Residue Ser-1098 is modified to Phosphoserine. The segment at 1120–1177 (EREGNTEEDELEEEEDLPTASKLTPEDSPALTPPSPFRDSVASGSSVPSSPVSESVLC) is disordered. Residues 1125–1136 (TEEDELEEEEDL) are compositionally biased toward acidic residues. The residue at position 1147 (Ser-1147) is a Phosphoserine. Position 1151 is a phosphothreonine (Thr-1151). Ser-1154 is modified (phosphoserine). Positions 1159–1175 (SVASGSSVPSSPVSESV) are enriched in low complexity.

The protein belongs to the G-protein coupled receptor 3 family. Homodimer; disulfide-linked. The PPXXF motif binds HOMER1, HOMER2 and HOMER3. Interacts with TAMALIN. Interacts with RYR1, RYR2, ITPR1, SHANK1 and SHANK3. Interacts with SIAH1. As to expression, predominantly expressed in cerebellar Purkinje cells, CA2-CA3 pyramidal cells of the hippocampus, and mitral and tufted cells of the olfactory bulb.

It localises to the cell membrane. Its subcellular location is the postsynaptic cell membrane. It is found in the cell projection. The protein resides in the dendrite. G-protein coupled receptor for glutamate. Ligand binding causes a conformation change that triggers signaling via guanine nucleotide-binding proteins (G proteins) and modulates the activity of down-stream effectors. Signaling activates a phosphatidylinositol-calcium second messenger system. May participate in the central action of glutamate in the CNS, such as long-term potentiation in the hippocampus and long-term depression in the cerebellum. May function in the light response in the retina. Induces GRID1 and GRID2 cation-channel activation via GNAQ-PLC-PKC pathway in dopaminergic neurons and cerebellar Purkinje cell, respectively. The chain is Metabotropic glutamate receptor 1 (Grm1) from Rattus norvegicus (Rat).